We begin with the raw amino-acid sequence, 151 residues long: Putative pre-16S rRNA nuclease (151 aa).

This sequence belongs to the YqgF nuclease family.

It localises to the cytoplasm. Its function is as follows. Could be a nuclease involved in processing of the 5'-end of pre-16S rRNA. This is Putative pre-16S rRNA nuclease from Thermosynechococcus vestitus (strain NIES-2133 / IAM M-273 / BP-1).